A 227-amino-acid chain; its full sequence is Cytochrome c oxidase subunit 2 (227 aa).

Over 1-14 the chain is Mitochondrial intermembrane; sequence MAYPFQLGLQDATS. The chain crosses the membrane as a helical span at residues 15–45; that stretch reads PIMEELTNFHDHTLMIVFLISSLVLYIISLM. The Mitochondrial matrix portion of the chain corresponds to 46 to 59; the sequence is LTTKLTHTSTMDAQ. A helical transmembrane segment spans residues 60 to 87; it reads EVETIWTILPAAILVLIALPSLRILYMM. Topologically, residues 88-227 are mitochondrial intermembrane; sequence DEINNPVLTV…YFESWSASMI (140 aa). Positions 161, 196, 198, 200, 204, and 207 each coordinate Cu cation. Glu198 contacts Mg(2+). At Tyr218 the chain carries Phosphotyrosine.

It belongs to the cytochrome c oxidase subunit 2 family. Component of the cytochrome c oxidase (complex IV, CIV), a multisubunit enzyme composed of 14 subunits. The complex is composed of a catalytic core of 3 subunits MT-CO1, MT-CO2 and MT-CO3, encoded in the mitochondrial DNA, and 11 supernumerary subunits COX4I, COX5A, COX5B, COX6A, COX6B, COX6C, COX7A, COX7B, COX7C, COX8 and NDUFA4, which are encoded in the nuclear genome. The complex exists as a monomer or a dimer and forms supercomplexes (SCs) in the inner mitochondrial membrane with NADH-ubiquinone oxidoreductase (complex I, CI) and ubiquinol-cytochrome c oxidoreductase (cytochrome b-c1 complex, complex III, CIII), resulting in different assemblies (supercomplex SCI(1)III(2)IV(1) and megacomplex MCI(2)III(2)IV(2)). Found in a complex with TMEM177, COA6, COX18, COX20, SCO1 and SCO2. Interacts with TMEM177 in a COX20-dependent manner. Interacts with COX20. Interacts with COX16. It depends on Cu cation as a cofactor.

It is found in the mitochondrion inner membrane. The enzyme catalyses 4 Fe(II)-[cytochrome c] + O2 + 8 H(+)(in) = 4 Fe(III)-[cytochrome c] + 2 H2O + 4 H(+)(out). Its function is as follows. Component of the cytochrome c oxidase, the last enzyme in the mitochondrial electron transport chain which drives oxidative phosphorylation. The respiratory chain contains 3 multisubunit complexes succinate dehydrogenase (complex II, CII), ubiquinol-cytochrome c oxidoreductase (cytochrome b-c1 complex, complex III, CIII) and cytochrome c oxidase (complex IV, CIV), that cooperate to transfer electrons derived from NADH and succinate to molecular oxygen, creating an electrochemical gradient over the inner membrane that drives transmembrane transport and the ATP synthase. Cytochrome c oxidase is the component of the respiratory chain that catalyzes the reduction of oxygen to water. Electrons originating from reduced cytochrome c in the intermembrane space (IMS) are transferred via the dinuclear copper A center (CU(A)) of subunit 2 and heme A of subunit 1 to the active site in subunit 1, a binuclear center (BNC) formed by heme A3 and copper B (CU(B)). The BNC reduces molecular oxygen to 2 water molecules using 4 electrons from cytochrome c in the IMS and 4 protons from the mitochondrial matrix. This is Cytochrome c oxidase subunit 2 (MT-CO2) from Conilurus penicillatus (Brush-tailed rabbit-rat).